A 301-amino-acid chain; its full sequence is Homoserine O-acetyltransferase (301 aa).

Residue cysteine 142 is the Acyl-thioester intermediate of the active site. Residues lysine 163 and serine 192 each coordinate substrate. The active-site Proton acceptor is histidine 235. Residue glutamate 237 is part of the active site. Residue arginine 249 coordinates substrate.

Belongs to the MetA family.

It localises to the cytoplasm. It carries out the reaction L-homoserine + acetyl-CoA = O-acetyl-L-homoserine + CoA. It functions in the pathway amino-acid biosynthesis; L-methionine biosynthesis via de novo pathway; O-acetyl-L-homoserine from L-homoserine: step 1/1. Transfers an acetyl group from acetyl-CoA to L-homoserine, forming acetyl-L-homoserine. The protein is Homoserine O-acetyltransferase of Bacillus cereus (strain AH187).